The primary structure comprises 237 residues: Ergosterol biosynthesis protein 29 (237 aa).

A helical membrane pass occupies residues 36 to 56 (ITLFLIVVGTLAFFNELYITI).

Its subcellular location is the endoplasmic reticulum membrane. Functionally, part of the third module of ergosterol biosynthesis pathway that includes the late steps of the pathway. ERG29 regulates the activity of the iron-containing C4-methylsterol oxidase ERG25. The third module or late pathway involves the ergosterol synthesis itself through consecutive reactions that mainly occur in the endoplasmic reticulum (ER) membrane. Firstly, the squalene synthase ERG9 catalyzes the condensation of 2 farnesyl pyrophosphate moieties to form squalene, which is the precursor of all steroids. Squalene synthase is crucial for balancing the incorporation of farnesyl diphosphate (FPP) into sterol and nonsterol isoprene synthesis. Secondly, the squalene epoxidase ERG1 catalyzes the stereospecific oxidation of squalene to (S)-2,3-epoxysqualene, which is considered to be a rate-limiting enzyme in steroid biosynthesis. Then, the lanosterol synthase ERG7 catalyzes the cyclization of (S)-2,3 oxidosqualene to lanosterol, a reaction that forms the sterol core. In the next steps, lanosterol is transformed to zymosterol through a complex process involving various demethylation, reduction and desaturation reactions. The lanosterol 14-alpha-demethylase ERG11 (also known as CYP51) catalyzes C14-demethylation of lanosterol to produce 4,4'-dimethyl cholesta-8,14,24-triene-3-beta-ol, which is critical for ergosterol biosynthesis. The C-14 reductase ERG24 reduces the C14=C15 double bond of 4,4-dimethyl-cholesta-8,14,24-trienol to produce 4,4-dimethyl-cholesta-8,24-dienol. 4,4-dimethyl-cholesta-8,24-dienol is substrate of the C-4 demethylation complex ERG25-ERG26-ERG27 in which ERG25 catalyzes the three-step monooxygenation required for the demethylation of 4,4-dimethyl and 4alpha-methylsterols, ERG26 catalyzes the oxidative decarboxylation that results in a reduction of the 3-beta-hydroxy group at the C-3 carbon to an oxo group, and ERG27 is responsible for the reduction of the keto group on the C-3. ERG28 has a role as a scaffold to help anchor ERG25, ERG26 and ERG27 to the endoplasmic reticulum and ERG29 regulates the activity of the iron-containing C4-methylsterol oxidase ERG25. Then, the sterol 24-C-methyltransferase ERG6 catalyzes the methyl transfer from S-adenosyl-methionine to the C-24 of zymosterol to form fecosterol. The C-8 sterol isomerase ERG2 catalyzes the reaction which results in unsaturation at C-7 in the B ring of sterols and thus converts fecosterol to episterol. The sterol-C5-desaturase ERG3 then catalyzes the introduction of a C-5 double bond in the B ring to produce 5-dehydroepisterol. The C-22 sterol desaturase ERG5 further converts 5-dehydroepisterol into ergosta-5,7,22,24(28)-tetraen-3beta-ol by forming the C-22(23) double bond in the sterol side chain. Finally, ergosta-5,7,22,24(28)-tetraen-3beta-ol is substrate of the C-24(28) sterol reductase ERG4 to produce ergosterol. In terms of biological role, plays a role in maintaining mitochondrial and plasma membrane integrity and consequently impacting the iron homeostasis, respiratory metabolism and antioxidant response. This is Ergosterol biosynthesis protein 29 from Saccharomyces cerevisiae (strain ATCC 204508 / S288c) (Baker's yeast).